Reading from the N-terminus, the 71-residue chain is MKKNIAFLLASMFVFSIATNAYASTQSNKKDLCEHYRQIAKESCKKGFLGVRDGTAGACFGAQIMVAAKGC.

An N-terminal signal peptide occupies residues 1–23; it reads MKKNIAFLLASMFVFSIATNAYA. 2 cysteine pairs are disulfide-bonded: cysteine 33-cysteine 71 and cysteine 44-cysteine 59.

Its subcellular location is the secreted. Toxin which activates the particulate form of guanylate cyclase and increases cyclic GMP levels within the host intestinal epithelial cells. In Escherichia coli, this protein is Heat-stable enterotoxin II (stiI).